The following is a 334-amino-acid chain: Methionyl-tRNA formyltransferase (334 aa).

Serine 111–proline 114 contacts (6S)-5,6,7,8-tetrahydrofolate.

This sequence belongs to the Fmt family.

It catalyses the reaction L-methionyl-tRNA(fMet) + (6R)-10-formyltetrahydrofolate = N-formyl-L-methionyl-tRNA(fMet) + (6S)-5,6,7,8-tetrahydrofolate + H(+). Its function is as follows. Attaches a formyl group to the free amino group of methionyl-tRNA(fMet). The formyl group appears to play a dual role in the initiator identity of N-formylmethionyl-tRNA by promoting its recognition by IF2 and preventing the misappropriation of this tRNA by the elongation apparatus. This is Methionyl-tRNA formyltransferase from Cyanothece sp. (strain PCC 7425 / ATCC 29141).